We begin with the raw amino-acid sequence, 414 residues long: Esterase FrsA (414 aa).

It belongs to the FrsA family.

It catalyses the reaction a carboxylic ester + H2O = an alcohol + a carboxylate + H(+). In terms of biological role, catalyzes the hydrolysis of esters. The protein is Esterase FrsA of Escherichia coli O6:K15:H31 (strain 536 / UPEC).